Here is a 417-residue protein sequence, read N- to C-terminus: Probable histone-binding protein lin-53 (417 aa).

6 WD repeats span residues 118–158 (NHEG…AVPR), 170–210 (GHTK…NVAG), 220–260 (GHES…PGHC), 263–303 (AHSA…MKLH), 307–347 (SHRD…EDQS), and 364–404 (GHTA…YNEV).

This sequence belongs to the WD repeat RBAP46/RBAP48/MSI1 family. In terms of assembly, binds directly to helix 1 of the histone fold of histone H4, a region that is not accessible when H4 is in chromatin. Probable component of a NuRD-like complex, composed of at least lin-53 and hda-1. Interacts with lin-35. Interacts with hda-1; the interaction is direct. Component of the DRM complex, at least composed of lin-9, lin-35, lin-37, lin-52, lin-53, lin-54- dpl-1 and efl-1. Interacts with hcp-3.

It is found in the nucleus. The protein localises to the chromosome. It localises to the centromere. Its function is as follows. Core histone-binding subunit that may target chromatin assembly factors, chromatin remodeling factors and histone deacetylases to their histone substrates in a manner that is regulated by nucleosomal DNA. Required for hcp-3 and his-1 stabilization, localization of hcp-3 to centromeres and for proper chromosome segregation. Synthetic multivulva class B (synMuvB) protein. SynMuvB proteins are required to repress the induction of vulval development by Ras signaling and probably act by forming the multiprotein DRM complex that represses transcription. This chain is Probable histone-binding protein lin-53, found in Caenorhabditis elegans.